The sequence spans 761 residues: RNA-binding protein mde7 (761 aa).

Composition is skewed to polar residues over residues 31–46 (PNHS…NSLL), 58–83 (SRNS…TTPF), and 99–110 (SRNNSYLQGTAE). Disordered stretches follow at residues 31–110 (PNHS…GTAE) and 188–213 (HYFD…EASN). Basic and acidic residues predominate over residues 188 to 197 (HYFDDTDKSV). The segment covering 199–211 (SKSSSGSNSLSEA) has biased composition (low complexity). In terms of domain architecture, RRM 1 spans 223 to 289 (IVGGLPDDFD…SSTNNFTIIQ (67 aa)). A compositionally biased stretch (polar residues) spans 442 to 466 (ESNSLSNQPNNFAQTSFDYQPNHPN). A disordered region spans residues 442–468 (ESNSLSNQPNNFAQTSFDYQPNHPNAI). Positions 602-679 (NTIYVGNLSN…GGIRLSYSKN (78 aa)) constitute an RRM 2 domain.

The polypeptide is RNA-binding protein mde7 (mde7) (Schizosaccharomyces pombe (strain 972 / ATCC 24843) (Fission yeast)).